Consider the following 263-residue polypeptide: DNA repair protein RecO (263 aa).

The tract at residues Asp-243–Val-263 is disordered. Over residues Val-252–Val-263 the composition is skewed to polar residues.

The protein belongs to the RecO family.

Functionally, involved in DNA repair and RecF pathway recombination. This Neisseria meningitidis serogroup C / serotype 2a (strain ATCC 700532 / DSM 15464 / FAM18) protein is DNA repair protein RecO.